A 51-amino-acid polypeptide reads, in one-letter code: Small ribosomal subunit protein eS31 (51 aa).

The Zn(2+) site is built by cysteine 21, cysteine 24, cysteine 39, and cysteine 42. Residues 21–42 (CVRCSNGVFMADHGDRYACGKC) form a C4-type zinc finger.

This sequence belongs to the eukaryotic ribosomal protein eS31 family. Part of the 30S ribosomal subunit. Zn(2+) serves as cofactor.

The protein is Small ribosomal subunit protein eS31 of Methanothermobacter thermautotrophicus (strain ATCC 29096 / DSM 1053 / JCM 10044 / NBRC 100330 / Delta H) (Methanobacterium thermoautotrophicum).